A 361-amino-acid polypeptide reads, in one-letter code: Glutamate 5-kinase (361 aa).

Residue lysine 14 participates in ATP binding. Residues serine 54, aspartate 141, and asparagine 153 each contribute to the substrate site. In terms of domain architecture, PUA spans 277–355 (KGAVIINQGA…KGLKPVIHYD (79 aa)).

The protein belongs to the glutamate 5-kinase family.

The protein localises to the cytoplasm. The catalysed reaction is L-glutamate + ATP = L-glutamyl 5-phosphate + ADP. It participates in amino-acid biosynthesis; L-proline biosynthesis; L-glutamate 5-semialdehyde from L-glutamate: step 1/2. Catalyzes the transfer of a phosphate group to glutamate to form L-glutamate 5-phosphate. This is Glutamate 5-kinase from Chlorobaculum tepidum (strain ATCC 49652 / DSM 12025 / NBRC 103806 / TLS) (Chlorobium tepidum).